Consider the following 228-residue polypeptide: Superoxide dismutase [Mn], mitochondrial (228 aa).

A mitochondrion-targeting transit peptide spans Met1 to Gly24. His52, His100, Asp189, and His193 together coordinate Mn(2+).

The protein belongs to the iron/manganese superoxide dismutase family. Homotetramer. It depends on Mn(2+) as a cofactor.

Its subcellular location is the mitochondrion matrix. It carries out the reaction 2 superoxide + 2 H(+) = H2O2 + O2. Destroys superoxide anion radicals which are normally produced within the cells and which are toxic to biological systems. The chain is Superoxide dismutase [Mn], mitochondrial (SODA) from Nicotiana plumbaginifolia (Leadwort-leaved tobacco).